Consider the following 666-residue polypeptide: Semaphorin-7A (666 aa).

The segment at 1–21 (MTPPPPGRAAPSAPRARVPGP) is disordered. The signal sequence occupies residues 1-44 (MTPPPPGRAAPSAPRARVPGPPARLGLPLRLRLLLLLWAAAASA). Positions 9-21 (AAPSAPRARVPGP) are enriched in low complexity. Residues 53–490 (RIFAVWKGHV…SQWEVSQVPL (438 aa)) enclose the Sema domain. Asn-105 carries N-linked (GlcNAc...) asparagine glycosylation. Residues Cys-120 and Cys-126 are joined by a disulfide bond. Asymmetric dimethylarginine is present on Arg-135. A disulfide bridge links Cys-143 with Cys-152. N-linked (GlcNAc...) asparagine glycans are attached at residues Asn-157 and Asn-258. 7 disulfides stabilise this stretch: Cys-266–Cys-366, Cys-291–Cys-335, Cys-493–Cys-511, Cys-500–Cys-541, Cys-503–Cys-518, Cys-566–Cys-613, and Cys-587–Cys-596. Residues 267–269 (RGD) are interaction with integrins. The short motif at 267 to 269 (RGD) is the Cell attachment site element. Residue Asn-330 is glycosylated (N-linked (GlcNAc...) asparagine). The Ig-like C2-type domain maps to 544–629 (PKPDKAPLQK…YFREAQHWQL (86 aa)). Residue Asn-602 is glycosylated (N-linked (GlcNAc...) asparagine). Ala-648 is lipidated: GPI-anchor amidated alanine. A propeptide spans 649-666 (ASLWLGVLPTLTLGLLVH) (removed in mature form).

Belongs to the semaphorin family. Interacts with ITGA1 and ITGB1. Interacts with PLXNC1. In terms of tissue distribution, detected in skin keratinocytes and on endothelial cells from skin blood vessels (at protein level). Expressed in fibroblasts, keratinocytes, melanocytes, placenta, testis, ovary, spleen, brain, spinal cord, lung, heart, adrenal gland, lymph nodes, thymus, intestine and kidney.

It is found in the cell membrane. Its function is as follows. Plays an important role in integrin-mediated signaling and functions both in regulating cell migration and immune responses. Promotes formation of focal adhesion complexes, activation of the protein kinase PTK2/FAK1 and subsequent phosphorylation of MAPK1 and MAPK3. Promotes production of pro-inflammatory cytokines by monocytes and macrophages. Plays an important role in modulating inflammation and T-cell-mediated immune responses. Promotes axon growth in the embryonic olfactory bulb. Promotes attachment, spreading and dendrite outgrowth in melanocytes. This Homo sapiens (Human) protein is Semaphorin-7A (SEMA7A).